The following is a 635-amino-acid chain: Threonine--tRNA ligase (635 aa).

The 61-residue stretch at 1-61 (MINISLSDGS…ENNCKLRILT (61 aa)) folds into the TGS domain. The tract at residues 242–533 (DHRKLGRELD…LIEEYAGCFP (292 aa)) is catalytic. Zn(2+) is bound by residues C333, H384, and H510.

The protein belongs to the class-II aminoacyl-tRNA synthetase family. Homodimer. Zn(2+) is required as a cofactor.

The protein resides in the cytoplasm. It catalyses the reaction tRNA(Thr) + L-threonine + ATP = L-threonyl-tRNA(Thr) + AMP + diphosphate + H(+). Functionally, catalyzes the attachment of threonine to tRNA(Thr) in a two-step reaction: L-threonine is first activated by ATP to form Thr-AMP and then transferred to the acceptor end of tRNA(Thr). Also edits incorrectly charged L-seryl-tRNA(Thr). This chain is Threonine--tRNA ligase, found in Rickettsia canadensis (strain McKiel).